A 325-amino-acid polypeptide reads, in one-letter code: DDB1- and CUL4-associated factor 7 homolog (325 aa).

WD repeat units lie at residues 62–104 (EHPY…RSIK), 115–155 (EFCA…AKTQ), 158–197 (AHDKEVFDIAFARGTDLFASVGADGSLRMFDLRNLEHSTI), and 247–287 (FHKS…KPIE).

It belongs to the WD repeat DCAF7 family.

This is DDB1- and CUL4-associated factor 7 homolog (wdr68) from Dictyostelium discoideum (Social amoeba).